Here is a 259-residue protein sequence, read N- to C-terminus: Glucosamine-6-phosphate deaminase (259 aa).

Catalysis depends on Asp66, which acts as the Proton acceptor; for enolization step. The active-site For ring-opening step is the Asp135. The active-site Proton acceptor; for ring-opening step is the His137. Glu142 acts as the For ring-opening step in catalysis.

This sequence belongs to the glucosamine/galactosamine-6-phosphate isomerase family. NagB subfamily.

It carries out the reaction alpha-D-glucosamine 6-phosphate + H2O = beta-D-fructose 6-phosphate + NH4(+). It participates in amino-sugar metabolism; N-acetylneuraminate degradation; D-fructose 6-phosphate from N-acetylneuraminate: step 5/5. Catalyzes the reversible isomerization-deamination of glucosamine 6-phosphate (GlcN6P) to form fructose 6-phosphate (Fru6P) and ammonium ion. This Rhodococcus opacus (strain B4) protein is Glucosamine-6-phosphate deaminase.